A 108-amino-acid polypeptide reads, in one-letter code: Cell division topological specificity factor (108 aa).

Belongs to the MinE family.

Functionally, prevents the cell division inhibition by proteins MinC and MinD at internal division sites while permitting inhibition at polar sites. This ensures cell division at the proper site by restricting the formation of a division septum at the midpoint of the long axis of the cell. The protein is Cell division topological specificity factor of Prochlorococcus marinus (strain MIT 9215).